The sequence spans 351 residues: ATP-dependent protease ATP-binding subunit-like protein (351 aa).

The disordered stretch occupies residues 1–26 (MPYITDMLRDRNSAATPPAEERSEPV). 79-86 (GPTGVGKT) serves as a coordination point for ATP.

This sequence belongs to the ClpA/ClpB family.

This chain is ATP-dependent protease ATP-binding subunit-like protein, found in Rhodococcus erythropolis (Arthrobacter picolinophilus).